Consider the following 472-residue polypeptide: Estrogen receptor beta (472 aa).

Residues 1–104 (MAFCSPAMMN…NPGSKRDAHF (104 aa)) are modulating. 2 NR C4-type zinc fingers span residues 105-125 (CAVC…CEGC) and 141-165 (CPAT…LRKC). The nuclear receptor DNA-binding region spans 105–170 (CAVCSDYASG…RLRKCYEVGM (66 aa)). An NR LBD domain is found at 217-449 (SPEQFVLTLL…DLLLEMLNAH (233 aa)).

The protein belongs to the nuclear hormone receptor family. NR3 subfamily. Binds DNA as a homodimer. Can form a heterodimer with ER-alpha. As to expression, a high expression is seen in the telencephalon, diencephalon, pituitary, testis and kidneys but little or no expression is seen in the cerebellum, pectoral muscle and adrenal gland.

It is found in the nucleus. Binds estrogens with an affinity similar to that of ER-alpha, and activates expression of reporter genes containing estrogen response elements (ERE) in an estrogen-dependent manner. This chain is Estrogen receptor beta (ESR2), found in Coturnix japonica (Japanese quail).